The primary structure comprises 347 residues: Ribosomal RNA small subunit methyltransferase C (347 aa).

Belongs to the methyltransferase superfamily. RsmC family. In terms of assembly, monomer.

The protein resides in the cytoplasm. It catalyses the reaction guanosine(1207) in 16S rRNA + S-adenosyl-L-methionine = N(2)-methylguanosine(1207) in 16S rRNA + S-adenosyl-L-homocysteine + H(+). Specifically methylates the guanine in position 1207 of 16S rRNA in the 30S particle. This Serratia proteamaculans (strain 568) protein is Ribosomal RNA small subunit methyltransferase C.